The chain runs to 319 residues: Ribosomal RNA small subunit methyltransferase H (319 aa).

S-adenosyl-L-methionine-binding positions include 37–39 (GGY), aspartate 57, phenylalanine 96, aspartate 105, and glutamine 112. Over residues 292 to 302 (RPDEREKERNP) the composition is skewed to basic and acidic residues. The tract at residues 292 to 319 (RPDEREKERNPRSRSARLRAVEKQGVPA) is disordered.

Belongs to the methyltransferase superfamily. RsmH family.

The protein resides in the cytoplasm. The enzyme catalyses cytidine(1402) in 16S rRNA + S-adenosyl-L-methionine = N(4)-methylcytidine(1402) in 16S rRNA + S-adenosyl-L-homocysteine + H(+). Functionally, specifically methylates the N4 position of cytidine in position 1402 (C1402) of 16S rRNA. The polypeptide is Ribosomal RNA small subunit methyltransferase H (Syntrophobacter fumaroxidans (strain DSM 10017 / MPOB)).